We begin with the raw amino-acid sequence, 451 residues long: Exodeoxyribonuclease 7 large subunit (451 aa).

This sequence belongs to the XseA family. As to quaternary structure, heterooligomer composed of large and small subunits.

Its subcellular location is the cytoplasm. The enzyme catalyses Exonucleolytic cleavage in either 5'- to 3'- or 3'- to 5'-direction to yield nucleoside 5'-phosphates.. In terms of biological role, bidirectionally degrades single-stranded DNA into large acid-insoluble oligonucleotides, which are then degraded further into small acid-soluble oligonucleotides. This is Exodeoxyribonuclease 7 large subunit from Bacillus cytotoxicus (strain DSM 22905 / CIP 110041 / 391-98 / NVH 391-98).